A 313-amino-acid chain; its full sequence is HPr kinase/phosphorylase (313 aa).

Active-site residues include histidine 140 and lysine 161. 155-162 (GNSGAGKS) provides a ligand contact to ATP. Serine 162 serves as a coordination point for Mg(2+). Catalysis depends on aspartate 179, which acts as the Proton acceptor; for phosphorylation activity. Proton donor; for dephosphorylation activity. An important for the catalytic mechanism of both phosphorylation and dephosphorylation region spans residues 203–212 (IEVRGLGILN). Glutamate 204 lines the Mg(2+) pocket. Arginine 246 is an active-site residue. Residues 267 to 272 (PVAAGR) are important for the catalytic mechanism of dephosphorylation.

Belongs to the HPrK/P family. In terms of assembly, homohexamer. It depends on Mg(2+) as a cofactor.

The enzyme catalyses [HPr protein]-L-serine + ATP = [HPr protein]-O-phospho-L-serine + ADP + H(+). It catalyses the reaction [HPr protein]-O-phospho-L-serine + phosphate + H(+) = [HPr protein]-L-serine + diphosphate. Functionally, catalyzes the ATP- as well as the pyrophosphate-dependent phosphorylation of a specific serine residue in HPr, a phosphocarrier protein of the phosphoenolpyruvate-dependent sugar phosphotransferase system (PTS). HprK/P also catalyzes the pyrophosphate-producing, inorganic phosphate-dependent dephosphorylation (phosphorolysis) of seryl-phosphorylated HPr (P-Ser-HPr). The polypeptide is HPr kinase/phosphorylase (Azoarcus sp. (strain BH72)).